The chain runs to 312 residues: Olfactory receptor 8G50 (312 aa).

At 1–28 (MAYSNQSRVTEFIISGLTNKPELQLPLF) the chain is on the extracellular side. A glycan (N-linked (GlcNAc...) asparagine) is linked at Asn5. The helical transmembrane segment at 29 to 49 (LLFLGIYLFTVLGNLGMIILI) threads the bilayer. Residues 50–56 (LLSSHLH) lie on the Cytoplasmic side of the membrane. Residues 57 to 77 (TPMYFFLSSLSFIDLCYSTII) traverse the membrane as a helical segment. The Extracellular segment spans residues 78–99 (TPKMLVNFVTTKNVISYQECMT). Cys97 and Cys189 are oxidised to a cystine. A helical transmembrane segment spans residues 100–120 (QLYFFIAFVISECHMLAAMAY). The Cytoplasmic portion of the chain corresponds to 121-143 (DRYVAICNPLLYNVTMSYQVCSW). A helical membrane pass occupies residues 144–164 (MVGGVYGMGFIGAAIHTFCML). The Extracellular segment spans residues 165–204 (RVVFCKDNIINHYFCDLFPLMELACSSTYVNEVVLLSLSA). A helical membrane pass occupies residues 205–225 (FNIFIPTLTILGSYIFIIISI). Over 226-244 (LRIKSTEGRFKAFSTCSSH) the chain is Cytoplasmic. The helical transmembrane segment at 245–265 (FSAVSVFFGSLAFMYLQPFSV) threads the bilayer. At 266-274 (SSKDKGKVS) the chain is on the extracellular side. A helical transmembrane segment spans residues 275-292 (SVFYTTIVPMLNPMIYSL). At 293–312 (RNRDVKLALNKLFQKKKFHV) the chain is on the cytoplasmic side.

This sequence belongs to the G-protein coupled receptor 1 family.

It is found in the cell membrane. Odorant receptor. The chain is Olfactory receptor 8G50 from Mus musculus (Mouse).